Consider the following 130-residue polypeptide: Flagellar assembly factor FliW (130 aa).

The protein belongs to the FliW family. Interacts with translational regulator CsrA and flagellin(s).

Its subcellular location is the cytoplasm. In terms of biological role, acts as an anti-CsrA protein, binds CsrA and prevents it from repressing translation of its target genes, one of which is flagellin. Binds to flagellin and participates in the assembly of the flagellum. This chain is Flagellar assembly factor FliW, found in Borreliella burgdorferi (strain ATCC 35210 / DSM 4680 / CIP 102532 / B31) (Borrelia burgdorferi).